Here is a 287-residue protein sequence, read N- to C-terminus: Isopentenyl-diphosphate Delta-isomerase 1, chloroplastic (287 aa).

The N-terminal 51 residues, 1-51 (MTLLLNTTAKLYIAPRTLPFTSSSTFARSPFLRIPSLLKPLSPLTARVSLS), are a transit peptide targeting the chloroplast. Lys-90 is a substrate binding site. Residues His-94 and His-106 each coordinate Mg(2+). The Nudix hydrolase domain occupies 104-256 (LLHRAFSVFL…GLKLSPWFRL (153 aa)). Arg-125 and Lys-129 together coordinate substrate. The active site involves Cys-141. Substrate is bound at residue Ser-142. The Nudix box signature appears at 142 to 172 (SHPLYRESELIDEESLGARNAAQRKLLDELG). Mg(2+) is bound by residues Glu-201 and Glu-203. Glu-203 is a catalytic residue.

It belongs to the IPP isomerase type 1 family. As to quaternary structure, monomer. Requires Mg(2+) as cofactor. In terms of tissue distribution, mainly expressed in roots and trichomes and, to a lower extent, in leaves, flowers and stems.

It localises to the plastid. Its subcellular location is the chloroplast. The enzyme catalyses isopentenyl diphosphate = dimethylallyl diphosphate. Its pathway is isoprenoid biosynthesis; dimethylallyl diphosphate biosynthesis; dimethylallyl diphosphate from isopentenyl diphosphate: step 1/1. It functions in the pathway porphyrin-containing compound metabolism; chlorophyll biosynthesis. Catalyzes the 1,3-allylic rearrangement of the homoallylic substrate isopentenyl (IPP) to its highly electrophilic allylic isomer, dimethylallyl diphosphate (DMAPP). The polypeptide is Isopentenyl-diphosphate Delta-isomerase 1, chloroplastic (Cannabis sativa (Hemp)).